Reading from the N-terminus, the 502-residue chain is Bone morphogenetic protein receptor type-1B (502 aa).

An N-terminal signal peptide occupies residues 1-13 (MLLRSAGKLNVGT). The disordered stretch occupies residues 1–25 (MLLRSAGKLNVGTKKEDGESTAPTP). At 14 to 126 (KKEDGESTAP…DFVDGPIHHR (113 aa)) the chain is on the extracellular side. Intrachain disulfides connect C32-C53, C34-C38, C47-C71, C81-C95, and C96-C102. Residues 127 to 148 (ALLISVTVCSLLLVLIILFCYF) traverse the membrane as a helical segment. Topologically, residues 149-502 (RYKRQETRPR…KMSESQDIKL (354 aa)) are cytoplasmic. Residues 174-203 (ESLRDLIEQSQSSGSGSGLPLLVQRTIAKQ) enclose the GS domain. The Protein kinase domain occupies 204–494 (IQMVKQIGKG…LRVKKTLAKM (291 aa)). ATP-binding positions include 210 to 218 (IGKGRYGEV) and K231. The active-site Proton acceptor is the D332.

It belongs to the protein kinase superfamily. TKL Ser/Thr protein kinase family. TGFB receptor subfamily. In terms of assembly, interacts with high affinity with GDF5; positively regulates chondrocyte differentiation. Interacts with SCUBE3. Interacts with TSC22D1/TSC-22. Interacts with TGFBR3. The cofactor is Mg(2+). Mn(2+) serves as cofactor. In terms of processing, autophosphorylated.

It localises to the cell membrane. The enzyme catalyses L-threonyl-[receptor-protein] + ATP = O-phospho-L-threonyl-[receptor-protein] + ADP + H(+). It catalyses the reaction L-seryl-[receptor-protein] + ATP = O-phospho-L-seryl-[receptor-protein] + ADP + H(+). Its function is as follows. On ligand binding, forms a receptor complex consisting of two type II and two type I transmembrane serine/threonine kinases. Type II receptors phosphorylate and activate type I receptors which autophosphorylate, then bind and activate SMAD transcriptional regulators. Receptor for BMP7/OP-1 and GDF5. Positively regulates chondrocyte differentiation through GDF5 interaction. In Homo sapiens (Human), this protein is Bone morphogenetic protein receptor type-1B (BMPR1B).